We begin with the raw amino-acid sequence, 82 residues long: Small ribosomal subunit protein eS27A (82 aa).

The segment at 37 to 59 (CPGCLNITTVFSHAQTAVTCESC) adopts a C4-type zinc-finger fold. C40 carries the S-methylcysteine modification.

This sequence belongs to the eukaryotic ribosomal protein eS27 family. Component of the small ribosomal subunit (SSU). Mature yeast ribosomes consist of a small (40S) and a large (60S) subunit. The 40S small subunit contains 1 molecule of ribosomal RNA (18S rRNA) and 33 different proteins (encoded by 57 genes). The large 60S subunit contains 3 rRNA molecules (25S, 5.8S and 5S rRNA) and 46 different proteins (encoded by 81 genes). The cofactor is Zn(2+). Post-translationally, the N-terminus is not modified.

It is found in the cytoplasm. Its function is as follows. Component of the ribosome, a large ribonucleoprotein complex responsible for the synthesis of proteins in the cell. The small ribosomal subunit (SSU) binds messenger RNAs (mRNAs) and translates the encoded message by selecting cognate aminoacyl-transfer RNA (tRNA) molecules. The large subunit (LSU) contains the ribosomal catalytic site termed the peptidyl transferase center (PTC), which catalyzes the formation of peptide bonds, thereby polymerizing the amino acids delivered by tRNAs into a polypeptide chain. The nascent polypeptides leave the ribosome through a tunnel in the LSU and interact with protein factors that function in enzymatic processing, targeting, and the membrane insertion of nascent chains at the exit of the ribosomal tunnel. This is Small ribosomal subunit protein eS27A from Saccharomyces cerevisiae (strain ATCC 204508 / S288c) (Baker's yeast).